The following is a 549-amino-acid chain: Myotubularin-related protein 9 (549 aa).

Met-1 is subject to N-acetylmethionine. Positions 4–99 (AELIKTPRVD…LNIASSIEAL (96 aa)) constitute a GRAM domain. The Myotubularin phosphatase domain occupies 123–498 (GWHSFLPEQE…QSLQLWEGIF (376 aa)). Positions 508–542 (LDEAYEEMVNIIEYNKELQAKVNLLRRQLAELETE) form a coiled coil. The residue at position 548 (Ser-548) is a Phosphoserine.

This sequence belongs to the protein-tyrosine phosphatase family. Non-receptor class myotubularin subfamily. In terms of assembly, homodimer. Heterodimer (via C-terminus) with lipid phosphatase MTMR6 (via C-terminus). Heterodimer (via coiled coil domain) with lipid phosphatase MTMR7 (via C-terminus). Heterodimer with lipid phosphatase MTMR8.

The protein resides in the cytoplasm. Its subcellular location is the cell projection. The protein localises to the ruffle membrane. It is found in the perinuclear region. It localises to the endoplasmic reticulum. In terms of biological role, acts as an adapter for myotubularin-related phosphatases. Increases lipid phosphatase MTMR6 catalytic activity, specifically towards phosphatidylinositol 3,5-bisphosphate, and MTMR6 binding affinity for phosphorylated phosphatidylinositols. Positively regulates lipid phosphatase MTMR7 catalytic activity. Increases MTMR8 catalytic activity towards phosphatidylinositol 3-phosphate. The formation of the MTMR6-MTMR9 complex, stabilizes both MTMR6 and MTMR9 protein levels. Stabilizes MTMR8 protein levels. Plays a role in the late stages of macropinocytosis possibly by regulating MTMR6-mediated dephosphorylation of phosphatidylinositol 3-phosphate in membrane ruffles. Negatively regulates autophagy, in part via its association with MTMR8. Negatively regulates DNA damage-induced apoptosis, in part via its association with MTMR6. Does not bind mono-, di- and tri-phosphorylated phosphatidylinositols, phosphatidic acid and phosphatidylserine. The sequence is that of Myotubularin-related protein 9 (MTMR9) from Bos taurus (Bovine).